The following is a 279-amino-acid chain: Dermonecrotic toxin StSicTox-betaIB1i (279 aa).

Residue histidine 12 is part of the active site. The Mg(2+) site is built by glutamate 32 and aspartate 34. Histidine 48 acts as the Nucleophile in catalysis. 2 disulfide bridges follow: cysteine 52-cysteine 58 and cysteine 54-cysteine 198. Aspartate 92 serves as a coordination point for Mg(2+).

This sequence belongs to the arthropod phospholipase D family. Class II subfamily. Class IIb sub-subfamily. The cofactor is Mg(2+). As to expression, expressed by the venom gland.

The protein resides in the secreted. It carries out the reaction an N-(acyl)-sphingosylphosphocholine = an N-(acyl)-sphingosyl-1,3-cyclic phosphate + choline. The catalysed reaction is N-hexanoyl-sphing-4-enine-1-phosphocholine = N-(hexanoyl)-sphing-4-enine-1,3-cyclic phosphate + choline. It catalyses the reaction an N-(acyl)-sphingosylphosphoethanolamine = an N-(acyl)-sphingosyl-1,3-cyclic phosphate + ethanolamine. The enzyme catalyses N-dodecanoyl-heptadecasphing-4-enine-1-phosphoethanolamine = N-dodecanoyl-heptadecasphing-4-enine-1,3-cyclic phosphate + ethanolamine. It carries out the reaction a 1-acyl-sn-glycero-3-phosphoethanolamine = a 1-acyl-sn-glycero-2,3-cyclic phosphate + ethanolamine. The catalysed reaction is 1-tetradecanoyl-sn-glycero-3-phosphoethanolamine = 1-tetradecanoyl-sn-glycero-2,3-cyclic phosphate + ethanolamine. In terms of biological role, dermonecrotic toxins cleave the phosphodiester linkage between the phosphate and headgroup of certain phospholipids (sphingolipid and lysolipid substrates), forming an alcohol (often choline) and a cyclic phosphate. This toxin acts on lysophosphatidylethanolamine (LPE) and ceramide phosphoethanolamine (CPE) with high activity. This toxin acts on sphingomyelin (SM) with very low activity and is not active on lysophosphatidylserine (LPS), lysophosphatidylcholine (LPC) and lysophosphatidylglycerol (LPG). It acts by transphosphatidylation, releasing exclusively cyclic phosphate as second products. It is not surprising that spider toxins have affinity for ethanolamine-containing sphingolipids since they are common in insect prey. Induces dermonecrosis, hemolysis, increased vascular permeability, edema, inflammatory response, and platelet aggregation. This chain is Dermonecrotic toxin StSicTox-betaIB1i, found in Sicarius terrosus (Cave spider).